The chain runs to 746 residues: Lysine-specific histone demethylase 1 homolog 2 (746 aa).

Residues 1–26 (MNSPASDETAPRRNRRKVSRKNYDEN) form a disordered region. One can recognise an SWIRM domain in the interval 51–152 (EKETETEALI…FGVSPLFAPY (102 aa)). FAD-binding residues include Glu-189, Arg-191, Arg-197, and Glu-569.

It belongs to the flavin monoamine oxidase family. FAD is required as a cofactor. Expressed in the shoot and root apical regions of young seedlings. Expressed in inflorescences.

Its function is as follows. Probable histone demethylase that reduces the levels of histone H3 'Lys-4' methylation in chromatin of the floral repressor FLOWERING LOCUS C (FLC) and the sporophytically silenced floral repressor FWA. Seems to act in partial redundancy with FLOWERING LOCUS D (FLD) to repress FLC expression. Required for cytosine methylation of FWA. Controls primary seed dormancy by regulating DOG1 and abscisic acid signaling-related genes. This chain is Lysine-specific histone demethylase 1 homolog 2, found in Arabidopsis thaliana (Mouse-ear cress).